Reading from the N-terminus, the 339-residue chain is 3-isopropylmalate dehydrogenase (339 aa).

The substrate site is built by arginine 87, arginine 97, arginine 124, and aspartate 214. Residues aspartate 214, aspartate 238, and aspartate 242 each coordinate Mg(2+). Glycine 274–aspartate 286 contributes to the NAD(+) binding site.

It belongs to the isocitrate and isopropylmalate dehydrogenases family. LeuB type 2 subfamily. Homodimer. Requires Mg(2+) as cofactor. Mn(2+) serves as cofactor.

The protein localises to the cytoplasm. The catalysed reaction is (2R,3S)-3-isopropylmalate + NAD(+) = 4-methyl-2-oxopentanoate + CO2 + NADH. It participates in amino-acid biosynthesis; L-leucine biosynthesis; L-leucine from 3-methyl-2-oxobutanoate: step 3/4. Functionally, catalyzes the oxidation of 3-carboxy-2-hydroxy-4-methylpentanoate (3-isopropylmalate) to 3-carboxy-4-methyl-2-oxopentanoate. The product decarboxylates to 4-methyl-2 oxopentanoate. The protein is 3-isopropylmalate dehydrogenase of Mycobacterium ulcerans (strain Agy99).